Reading from the N-terminus, the 324-residue chain is Acetyl-coenzyme A carboxylase carboxyl transferase subunit alpha (324 aa).

Positions 37–291 constitute a CoA carboxyltransferase C-terminal domain; it reads KLERRLDKLK…QNFILQEWLR (255 aa).

It belongs to the AccA family. Acetyl-CoA carboxylase is a heterohexamer composed of biotin carboxyl carrier protein (AccB), biotin carboxylase (AccC) and two subunits each of ACCase subunit alpha (AccA) and ACCase subunit beta (AccD).

It localises to the cytoplasm. The catalysed reaction is N(6)-carboxybiotinyl-L-lysyl-[protein] + acetyl-CoA = N(6)-biotinyl-L-lysyl-[protein] + malonyl-CoA. The protein operates within lipid metabolism; malonyl-CoA biosynthesis; malonyl-CoA from acetyl-CoA: step 1/1. Component of the acetyl coenzyme A carboxylase (ACC) complex. First, biotin carboxylase catalyzes the carboxylation of biotin on its carrier protein (BCCP) and then the CO(2) group is transferred by the carboxyltransferase to acetyl-CoA to form malonyl-CoA. The sequence is that of Acetyl-coenzyme A carboxylase carboxyl transferase subunit alpha from Chlamydia caviae (strain ATCC VR-813 / DSM 19441 / 03DC25 / GPIC) (Chlamydophila caviae).